We begin with the raw amino-acid sequence, 369 residues long: uncharacterized protein (369 aa).

A run of 9 helical transmembrane segments spans residues 25–45, 47–67, 119–139, 152–172, 206–226, 235–255, 272–292, 296–316, and 323–343; these read QFVALSIWIILITLFSLWYDW, FCLLNLTIVGFFIAFCYFVPA, LNIVHLFVISGFHLSFLFNLM, LSGFAVLLIYLFLVGFAFSAL, HALNNFGFNFSFLACFVLLFV, LKPLVSSSLILIVISPLSLYL, PIALFYFCVSWIILPFIGVFG, FGIYLPLKMLSEWSLKVTVFL, and LIFFFVYYGLLGLLYTIFTVA.

To B.subtilis ComEC.

The protein resides in the cell membrane. This is an uncharacterized protein from Mycoplasma genitalium (strain ATCC 33530 / DSM 19775 / NCTC 10195 / G37) (Mycoplasmoides genitalium).